The chain runs to 763 residues: G protein-regulated inducer of neurite outgrowth 3 (763 aa).

3 disordered regions span residues 1–48 (MGTV…IGNV), 65–111 (QACV…APGL), and 192–268 (ENSQ…GATC). Over residues 27-44 (ESQSVSPQPAQPDNNASG) the composition is skewed to polar residues. Residues 93–104 (KTPDDFLLHGSK) show a composition bias toward basic and acidic residues. Residues 237–250 (ENKQPSATALNTTA) show a composition bias toward polar residues. Ser-323 and Ser-359 each carry phosphoserine. Disordered stretches follow at residues 420-452 (TSSQ…PDFQ), 471-624 (NQGL…PRRG), and 711-737 (VKTQ…GRQH). Residues 437–450 (KEATSRQPEGTNPD) are compositionally biased toward polar residues. Basic and acidic residues-rich tracts occupy residues 480–496 (REPE…KAES) and 518–539 (PTDK…KDHA). Low complexity predominate over residues 593–609 (SLSLPSDGTGDSSPGSG).

In terms of biological role, may be involved in neurite outgrowth. The polypeptide is G protein-regulated inducer of neurite outgrowth 3 (Gprin3) (Mus musculus (Mouse)).